The chain runs to 443 residues: Serine/threonine-protein phosphatase 2A 55 kDa regulatory subunit B beta isoform (443 aa).

7 WD repeats span residues 22–61 (TEAD…KNQP), 87–128 (EIEE…KRPE), 171–209 (AHTY…RSFN), 220–260 (ELTE…LCDR), 279–317 (EIIS…RPIE), 334–375 (ENDC…DVTL), and 410–443 (DFSK…DKVN).

The protein belongs to the phosphatase 2A regulatory subunit B family. In terms of assembly, PP2A consists of a common heterodimeric core enzyme, composed of a 36 kDa catalytic subunit (subunit C) and a 65 kDa constant regulatory subunit (PR65 or subunit A), that associates with a variety of regulatory subunits.

Its subcellular location is the cytoplasm. The protein localises to the cytoskeleton. It is found in the membrane. The B regulatory subunit might modulate substrate selectivity and catalytic activity, and might also direct the localization of the catalytic enzyme to a particular subcellular compartment. Negatively controls the initiation of oocyte maturation. The chain is Serine/threonine-protein phosphatase 2A 55 kDa regulatory subunit B beta isoform (ppp2r2b) from Xenopus tropicalis (Western clawed frog).